A 306-amino-acid polypeptide reads, in one-letter code: Mitochondrial basic amino acids transporter (306 aa).

Helical transmembrane passes span 2–22 (ALDF…GHPF), 61–81 (GLGS…GVQG), 96–116 (FLAG…MELA), 153–172 (GMVS…FLTY), 187–207 (LLVP…WLST), and 255–275 (LLRA…VLTY). Solcar repeat units lie at residues 2 to 86 (ALDF…TLRA), 90 to 178 (DSPL…MTRA), and 190 to 275 (PKLL…VLTY). The segment at 284–306 (DSEAALGTSPTPAGSALAQPSSL) is disordered. Over residues 291–306 (TSPTPAGSALAQPSSL) the composition is skewed to polar residues.

The protein belongs to the mitochondrial carrier (TC 2.A.29) family. In terms of tissue distribution, widely expressed, with highest levels in the brain, including cortex, cerebellum, hippocampus and hypothalamus, and moderate levels in liver, kidney, heart and testis.

The protein resides in the mitochondrion inner membrane. It catalyses the reaction L-lysine(out) + L-arginine(in) = L-lysine(in) + L-arginine(out). The enzyme catalyses L-histidine(out) + L-arginine(in) = L-histidine(in) + L-arginine(out). It carries out the reaction L-ornithine(in) + L-arginine(out) = L-ornithine(out) + L-arginine(in). The catalysed reaction is L-homoarginine(in) + L-arginine(out) = L-homoarginine(out) + L-arginine(in). It catalyses the reaction N(omega)-methyl-L-arginine(in) + L-arginine(out) = N(omega)-methyl-L-arginine(out) + L-arginine(in). The enzyme catalyses L-arginine(in) = L-arginine(out). It carries out the reaction L-lysine(in) = L-lysine(out). The catalysed reaction is L-ornithine(in) = L-ornithine(out). It catalyses the reaction L-histidine(out) = L-histidine(in). Mitochondrial transporter of arginine, lysine, homoarginine, methylarginine. Transports with a much lesser extent, ornithine and histidine. Does not transport carnitine nor acylcarnitines. Functions by both counter-exchange and uniport mechanisms. Plays a physiological role in the import of basic amino acids into mitochondria for mitochondrial protein synthesis and amino acid degradation. The protein is Mitochondrial basic amino acids transporter (Slc25a29) of Mus musculus (Mouse).